The following is a 290-amino-acid chain: Glutaredoxin domain-containing cysteine-rich protein 1 (290 aa).

In terms of domain architecture, Glutaredoxin spans 127–234 (LQQPSADLEF…DLLTKIERVQ (108 aa)).

Belongs to the GRXCR1 family. As to expression, in the inner ear, expressed predominantly in sensory hair cells and their stereocilia bundles with higher levels in outer hair cells (OHC) at P1 and in inner hair cells (IHC) at P5. At P1, expression is prominent in each row of stereocilia within bundles including immature shorter stereocilia. Expression is also observed in apical microvilli of sensory cells at P1 and in kinocilia at P1 and P5. In the adult, expression is localized throughout the length of the stereocilia of both OHC and IHC (at protein level).

The protein localises to the cell projection. It localises to the stereocilium. The protein resides in the microvillus. It is found in the kinocilium. Its function is as follows. May play a role in actin filament architecture in developing stereocilia of sensory cells. This chain is Glutaredoxin domain-containing cysteine-rich protein 1 (Grxcr1), found in Mus musculus (Mouse).